The chain runs to 365 residues: DNA replication and repair protein RecF (365 aa).

Residue 30–37 (GANGQGKT) coordinates ATP.

This sequence belongs to the RecF family.

It is found in the cytoplasm. Its function is as follows. The RecF protein is involved in DNA metabolism; it is required for DNA replication and normal SOS inducibility. RecF binds preferentially to single-stranded, linear DNA. It also seems to bind ATP. This chain is DNA replication and repair protein RecF, found in Geobacter metallireducens (strain ATCC 53774 / DSM 7210 / GS-15).